The chain runs to 162 residues: Balbiani ring protein 2 (162 aa).

The interval 1 to 31 (CDDAMRKTESDKCTNIGGKFDPSTCKCTPET) is last constant region. Residues 32 to 51 (VTEGPTTCLESSESDEVTTK) are last Cys-1 repeat. The unique region stretch occupies residues 52-162 (KPCDCTCAPD…VKGLEDILNS (111 aa)).

As to expression, salivary gland.

Its subcellular location is the secreted. In terms of biological role, used by the larvae to construct a supramolecular structure, the larval tube. This chain is Balbiani ring protein 2 (BR2), found in Chironomus pallidivittatus (Midge).